The sequence spans 690 residues: Methionine--tRNA ligase 1 (690 aa).

The short motif at 11-21 is the 'HIGH' region element; sequence PYANGHIHIGH. Zn(2+) is bound by residues Cys142, Cys145, Cys155, and Cys158. The short motif at 328–332 is the 'KMSKS' region element; that stretch reads KMSKS. Position 331 (Lys331) interacts with ATP. The region spanning 590–690 is the tRNA-binding domain; the sequence is DFSKVDLRVA…SGAKPGMRVH (101 aa).

It belongs to the class-I aminoacyl-tRNA synthetase family. MetG type 1 subfamily. In terms of assembly, homodimer. Zn(2+) is required as a cofactor.

The protein resides in the cytoplasm. The catalysed reaction is tRNA(Met) + L-methionine + ATP = L-methionyl-tRNA(Met) + AMP + diphosphate. In terms of biological role, is required not only for elongation of protein synthesis but also for the initiation of all mRNA translation through initiator tRNA(fMet) aminoacylation. In Sorangium cellulosum (strain So ce56) (Polyangium cellulosum (strain So ce56)), this protein is Methionine--tRNA ligase 1.